The primary structure comprises 406 residues: Cysteine desulfurase (406 aa).

Lys-226 bears the N6-(pyridoxal phosphate)lysine mark. Cys-364 (cysteine persulfide intermediate) is an active-site residue.

Belongs to the class-V pyridoxal-phosphate-dependent aminotransferase family. Csd subfamily. In terms of assembly, homodimer. Interacts with SufE and the SufBCD complex composed of SufB, SufC and SufD. The interaction with SufE is required to mediate the direct transfer of the sulfur atom from the S-sulfanylcysteine. Pyridoxal 5'-phosphate serves as cofactor.

The protein resides in the cytoplasm. It carries out the reaction (sulfur carrier)-H + L-cysteine = (sulfur carrier)-SH + L-alanine. The enzyme catalyses L-selenocysteine + AH2 = hydrogenselenide + L-alanine + A + H(+). It functions in the pathway cofactor biosynthesis; iron-sulfur cluster biosynthesis. In terms of biological role, cysteine desulfurases mobilize the sulfur from L-cysteine to yield L-alanine, an essential step in sulfur metabolism for biosynthesis of a variety of sulfur-containing biomolecules. Component of the suf operon, which is activated and required under specific conditions such as oxidative stress and iron limitation. Acts as a potent selenocysteine lyase in vitro, that mobilizes selenium from L-selenocysteine. Selenocysteine lyase activity is however unsure in vivo. The chain is Cysteine desulfurase from Escherichia coli O6:K15:H31 (strain 536 / UPEC).